Reading from the N-terminus, the 442-residue chain is D-serine dehydratase (442 aa).

Lys-118 carries the post-translational modification N6-(pyridoxal phosphate)lysine.

This sequence belongs to the serine/threonine dehydratase family. DsdA subfamily. As to quaternary structure, monomer. Pyridoxal 5'-phosphate is required as a cofactor.

It catalyses the reaction D-serine = pyruvate + NH4(+). The polypeptide is D-serine dehydratase (Escherichia coli (strain K12 / MC4100 / BW2952)).